We begin with the raw amino-acid sequence, 1225 residues long: DNA-directed RNA polymerase subunit beta' (1225 aa).

The Zn(2+) site is built by C60, C62, C75, and C78. Mg(2+)-binding residues include D450, D452, and D454. Positions 818, 892, 899, and 902 each coordinate Zn(2+).

It belongs to the RNA polymerase beta' chain family. In terms of assembly, the RNAP catalytic core consists of 2 alpha, 1 beta, 1 beta' and 1 omega subunit. When a sigma factor is associated with the core the holoenzyme is formed, which can initiate transcription. Mg(2+) serves as cofactor. The cofactor is Zn(2+).

The enzyme catalyses RNA(n) + a ribonucleoside 5'-triphosphate = RNA(n+1) + diphosphate. In terms of biological role, DNA-dependent RNA polymerase catalyzes the transcription of DNA into RNA using the four ribonucleoside triphosphates as substrates. In Streptococcus pneumoniae serotype 19F (strain G54), this protein is DNA-directed RNA polymerase subunit beta'.